Consider the following 107-residue polypeptide: Large ribosomal subunit protein eL21 (107 aa).

This sequence belongs to the eukaryotic ribosomal protein eL21 family.

The polypeptide is Large ribosomal subunit protein eL21 (rpl21e) (Aeropyrum pernix (strain ATCC 700893 / DSM 11879 / JCM 9820 / NBRC 100138 / K1)).